The chain runs to 132 residues: Small ribosomal subunit protein uS11 (132 aa).

Belongs to the universal ribosomal protein uS11 family. In terms of assembly, part of the 30S ribosomal subunit. Interacts with proteins S7 and S18. Binds to IF-3.

Located on the platform of the 30S subunit, it bridges several disparate RNA helices of the 16S rRNA. Forms part of the Shine-Dalgarno cleft in the 70S ribosome. The sequence is that of Small ribosomal subunit protein uS11 from Clostridioides difficile (strain 630) (Peptoclostridium difficile).